Consider the following 158-residue polypeptide: Endoribonuclease YbeY (158 aa).

Residues histidine 124, histidine 128, and histidine 134 each coordinate Zn(2+).

It belongs to the endoribonuclease YbeY family. The cofactor is Zn(2+).

Its subcellular location is the cytoplasm. Its function is as follows. Single strand-specific metallo-endoribonuclease involved in late-stage 70S ribosome quality control and in maturation of the 3' terminus of the 16S rRNA. In Caldicellulosiruptor saccharolyticus (strain ATCC 43494 / DSM 8903 / Tp8T 6331), this protein is Endoribonuclease YbeY.